The primary structure comprises 982 residues: NACHT, LRR and PYD domains-containing protein 4C (982 aa).

The Pyrin domain maps to 1-93; the sequence is MASFFSDFGL…MERAGREIAG (93 aa). The region spanning 148 to 471 is the NACHT domain; it reads HMVFLQGAAG…FYLLKSHMDH (324 aa). 154–161 lines the ATP pocket; the sequence is GAAGIGKS. 7 LRR repeats span residues 594–617, 689–716, 746–773, 802–825, 827–844, 859–882, and 916–940; these read CSTL…HSYT, NQCL…VLSQ, SKML…LCHP, NKTL…VLCG, LSLP…YCLI, NQNL…LLCD, and CKTL…LFEA.

It belongs to the NLRP family.

Functionally, may be involved in inflammation and recognition of cytosolic pathogen-associated molecular patterns (PAMPs) not intercepted by membrane-bound receptors. The polypeptide is NACHT, LRR and PYD domains-containing protein 4C (Nlrp4c) (Mus musculus (Mouse)).